The following is a 195-amino-acid chain: Coagulogen (195 aa).

Positions 1–20 are cleaved as a signal peptide; it reads MEKKLLGIAILFVTVVSVLA. Intrachain disulfides connect Cys28–Cys188, Cys30–Cys115, Cys80–Cys182, Cys85–Cys141, Cys95–Cys189, Cys108–Cys161, Cys147–Cys191, and Cys155–Cys193.

It belongs to the coagulin family. In terms of assembly, coagulogen is cleaved after Arg-38 and Arg-66 by a clotting enzyme contained in the hemocyte and activated by a bacterial endotoxin (lipopolysaccharide). This cleavage releases the peptide C and leaves 2 chains of coagulin, A and B, linked by two disulfide bonds. Coagulin molecules interlink to form a gel. In terms of tissue distribution, hemolymph.

The protein localises to the secreted. Functionally, coagulogen is a gel-forming protein of hemolymph; it hinders the spread of invaders by immobilizing them. In Limulus polyphemus (Atlantic horseshoe crab), this protein is Coagulogen.